Reading from the N-terminus, the 91-residue chain is N(2)-fixation sustaining protein CowN (91 aa).

Belongs to the CowN family.

Functionally, is required to sustain N(2)-dependent growth in the presence of low levels of carbon monoxide (CO). Probably acts by protecting the N(2) fixation ability of the nitrogenase complex, which is inactivated in the presence of CO. The chain is N(2)-fixation sustaining protein CowN from Gluconacetobacter diazotrophicus (strain ATCC 49037 / DSM 5601 / CCUG 37298 / CIP 103539 / LMG 7603 / PAl5).